Consider the following 278-residue polypeptide: Inner membrane mitoribosome receptor MBA1, mitochondrial (278 aa).

The N-terminal 33 residues, 1–33 (MSVLRSTCLFFPPRSLLISFNKRRLFSTSRLIL), are a transit peptide targeting the mitochondrion.

In terms of assembly, interacts with OXA1 and MDM38. Binds to mitoribosomes in order to recruit them to the mitochondrial inner membrane.

It is found in the mitochondrion inner membrane. Functionally, mitochondrial inner membrane-associated mitoribosome receptor that spatially aligns the mitoribosome exit tunnel with the membrane insertion machinery and allows cotranslational protein membrane insertion. The sequence is that of Inner membrane mitoribosome receptor MBA1, mitochondrial from Saccharomyces cerevisiae (strain ATCC 204508 / S288c) (Baker's yeast).